We begin with the raw amino-acid sequence, 85 residues long: Small ribosomal subunit protein uS17 (85 aa).

It belongs to the universal ribosomal protein uS17 family. In terms of assembly, part of the 30S ribosomal subunit.

Functionally, one of the primary rRNA binding proteins, it binds specifically to the 5'-end of 16S ribosomal RNA. In Geobacter metallireducens (strain ATCC 53774 / DSM 7210 / GS-15), this protein is Small ribosomal subunit protein uS17.